A 379-amino-acid polypeptide reads, in one-letter code: Cytochrome b (379 aa).

4 helical membrane-spanning segments follow: residues 33–53, 77–98, 113–133, and 178–198; these read FGSL…FLAM, WMIR…FIHV, WNVG…GYVL, and FFAL…IHLL. Positions 83 and 97 each coordinate heme b. Heme b-binding residues include His-182 and His-196. His-201 contributes to the a ubiquinone binding site. A run of 4 helical transmembrane segments spans residues 226–246, 288–308, 320–340, and 347–367; these read TKDF…ALFY, LGGV…PFLQ, LSQF…WIGG, and FISI…FIMP.

Belongs to the cytochrome b family. In terms of assembly, the cytochrome bc1 complex contains 11 subunits: 3 respiratory subunits (MT-CYB, CYC1 and UQCRFS1), 2 core proteins (UQCRC1 and UQCRC2) and 6 low-molecular weight proteins (UQCRH/QCR6, UQCRB/QCR7, UQCRQ/QCR8, UQCR10/QCR9, UQCR11/QCR10 and a cleavage product of UQCRFS1). This cytochrome bc1 complex then forms a dimer. Requires heme b as cofactor.

It is found in the mitochondrion inner membrane. In terms of biological role, component of the ubiquinol-cytochrome c reductase complex (complex III or cytochrome b-c1 complex) that is part of the mitochondrial respiratory chain. The b-c1 complex mediates electron transfer from ubiquinol to cytochrome c. Contributes to the generation of a proton gradient across the mitochondrial membrane that is then used for ATP synthesis. This chain is Cytochrome b (MT-CYB), found in Lepilemur septentrionalis (Northern sportive lemur).